The primary structure comprises 398 residues: tRNA-specific 2-thiouridylase MnmA (398 aa).

ATP-binding positions include 18-25 and leucine 44; that span reads AMSGGVDS. Cysteine 112 serves as the catalytic Nucleophile. Cysteine 112 and cysteine 213 are disulfide-bonded. Glycine 136 lines the ATP pocket. The segment at 163–165 is interaction with tRNA; it reads RDQ. The active-site Cysteine persulfide intermediate is cysteine 213.

Belongs to the MnmA/TRMU family.

The protein localises to the cytoplasm. The enzyme catalyses S-sulfanyl-L-cysteinyl-[protein] + uridine(34) in tRNA + AH2 + ATP = 2-thiouridine(34) in tRNA + L-cysteinyl-[protein] + A + AMP + diphosphate + H(+). Functionally, catalyzes the 2-thiolation of uridine at the wobble position (U34) of tRNA, leading to the formation of s(2)U34. The polypeptide is tRNA-specific 2-thiouridylase MnmA (Sinorhizobium fredii (strain NBRC 101917 / NGR234)).